The following is a 478-amino-acid chain: 3-isopropylmalate dehydratase large subunit (478 aa).

3 residues coordinate [4Fe-4S] cluster: cysteine 347, cysteine 407, and cysteine 410.

Belongs to the aconitase/IPM isomerase family. LeuC type 1 subfamily. In terms of assembly, heterodimer of LeuC and LeuD. [4Fe-4S] cluster is required as a cofactor.

It carries out the reaction (2R,3S)-3-isopropylmalate = (2S)-2-isopropylmalate. The protein operates within amino-acid biosynthesis; L-leucine biosynthesis; L-leucine from 3-methyl-2-oxobutanoate: step 2/4. In terms of biological role, catalyzes the isomerization between 2-isopropylmalate and 3-isopropylmalate, via the formation of 2-isopropylmaleate. This chain is 3-isopropylmalate dehydratase large subunit, found in Prochlorococcus marinus (strain MIT 9313).